Reading from the N-terminus, the 131-residue chain is Cystatin-like cysteine protease inhibitor EPIC3 (131 aa).

The N-terminal stretch at 1-20 (MAFTRSIALFAGLALAASSA) is a signal peptide. N33 is a glycosylation site (N-linked (GlcNAc...) asparagine). The short motif at 71-75 (QTVAG) is the Secondary area of contact element.

Belongs to the cystatin family.

The protein resides in the secreted. Its function is as follows. Secreted effector that interacts with and inhibits host apoplastic pathogenesis-related papain-like cysteine proteases. Inhibition of host proteases by a pathogen extracellular protease inhibitor forms a specific type of defense-counterdefense mechanism between plants and microbial pathogens. This is Cystatin-like cysteine protease inhibitor EPIC3 from Phytophthora infestans (Potato late blight agent).